The chain runs to 50 residues: Sperm protamine P1 (50 aa).

2 disulfide bridges follow: C7–C15 and C39–C47.

Belongs to the protamine P1 family. As to quaternary structure, cross-linked by interchain disulfide bonds around the DNA-helix. In terms of tissue distribution, testis.

It is found in the nucleus. Its subcellular location is the chromosome. Its function is as follows. Protamines substitute for histones in the chromatin of sperm during the haploid phase of spermatogenesis. They compact sperm DNA into a highly condensed, stable and inactive complex. This Oryctolagus cuniculus (Rabbit) protein is Sperm protamine P1 (PRM1).